We begin with the raw amino-acid sequence, 463 residues long: NADH dehydrogenase [ubiquinone] iron-sulfur protein 2, mitochondrial (463 aa).

The N-terminal 33 residues, 1 to 33, are a transit peptide targeting the mitochondrion; sequence MAALRALCGFRGVAAQVLRPGAGVRLPIQPSRG. Lys-62 carries the N6-acetyllysine modification. Residue Arg-118 is modified to Symmetric dimethylarginine. Cys-326, Cys-332, and Cys-347 together coordinate [4Fe-4S] cluster.

Belongs to the complex I 49 kDa subunit family. As to quaternary structure, core subunit of respiratory chain NADH dehydrogenase (Complex I) which is composed of 45 different subunits. Component of the iron-sulfur (IP) fragment of the enzyme. Interacts with NDUFAF3. Interacts with NDUFAF7. Interacts with CERS2. Requires [4Fe-4S] cluster as cofactor. In terms of processing, dimethylation at Arg-118 by NDUFAF7 takes place after NDUFS2 assembles into the complex I, leading to stabilize the early intermediate complex.

Its subcellular location is the mitochondrion inner membrane. The enzyme catalyses a ubiquinone + NADH + 5 H(+)(in) = a ubiquinol + NAD(+) + 4 H(+)(out). Core subunit of the mitochondrial membrane respiratory chain NADH dehydrogenase (Complex I) which catalyzes electron transfer from NADH through the respiratory chain, using ubiquinone as an electron acceptor. Essential for the catalytic activity and assembly of complex I. Redox-sensitive, critical component of the oxygen-sensing pathway in the pulmonary vasculature which plays a key role in acute pulmonary oxygen-sensing and hypoxic pulmonary vasoconstriction. Plays an important role in carotid body sensing of hypoxia. Essential for glia-like neural stem and progenitor cell proliferation, differentiation and subsequent oligodendrocyte or neuronal maturation. This Pan troglodytes (Chimpanzee) protein is NADH dehydrogenase [ubiquinone] iron-sulfur protein 2, mitochondrial (NDUFS2).